A 344-amino-acid chain; its full sequence is Fructose-bisphosphate aldolase (344 aa).

Residue Ser-53 participates in D-glyceraldehyde 3-phosphate binding. The active-site Proton donor is the Asp-95. 4 residues coordinate Zn(2+): His-96, Asp-131, Glu-161, and His-212. Gly-213 contributes to the dihydroxyacetone phosphate binding site. His-252 contributes to the Zn(2+) binding site. Dihydroxyacetone phosphate-binding positions include 253–255 and 274–277; these read GGS and NVDT.

Belongs to the class II fructose-bisphosphate aldolase family. Zn(2+) serves as cofactor.

It catalyses the reaction beta-D-fructose 1,6-bisphosphate = D-glyceraldehyde 3-phosphate + dihydroxyacetone phosphate. The protein operates within carbohydrate degradation; glycolysis; D-glyceraldehyde 3-phosphate and glycerone phosphate from D-glucose: step 4/4. Its function is as follows. Catalyzes the aldol condensation of dihydroxyacetone phosphate (DHAP or glycerone-phosphate) with glyceraldehyde 3-phosphate (G3P) to form fructose 1,6-bisphosphate (FBP) in gluconeogenesis and the reverse reaction in glycolysis. In Corynebacterium glutamicum (strain ATCC 13032 / DSM 20300 / JCM 1318 / BCRC 11384 / CCUG 27702 / LMG 3730 / NBRC 12168 / NCIMB 10025 / NRRL B-2784 / 534), this protein is Fructose-bisphosphate aldolase (fba).